A 619-amino-acid polypeptide reads, in one-letter code: Adagio protein 3 (619 aa).

Positions 44–123 constitute a PAS domain; it reads VGMFYYPMTP…SEIRRCLEEG (80 aa). Cysteine 91 bears the S-4a-FMN cysteine mark. Residues 127–168 enclose the PAC domain; it reads QGELLNFRKDGTPLVNRLRLAPIRDDDGTITHVIGIQVFSET. The region spanning 211 to 257 is the F-box domain; it reads ILQLSDEVLAHNILSRLTPRDVASIGSACRRLRQLTKNESVRKMVCQ. Kelch repeat units follow at residues 304–354, 357–404, 409–457, 462–513, and 523–571; these read SRCN…TSSP, RWGH…AGGT, RSWH…PTSW, RLGH…ECSA, and RLDH…NVPG.

Belongs to the ADAGIO family. As to quaternary structure, interacts with ADO1 (via Kelch repeats), ADO2 (via Kelch repeats), SKP1A/ASK1, SKP1B/ASK2, ASK3, SKP1K/ASK11, ASK12, ASK13 and SKP1N/ASK14. Interacts (via Kelch repeats) with CDF1, CDF2 and CDF3. Interacts (via N-terminus) with CO and GI (via N-terminus) in a blue-light-dependent manner. FMN binds covalently to cysteine after exposure to blue light and is reversed in the dark. In terms of tissue distribution, highly expressed in stomata and leaves and to a lower extent in seeds, roots, rosettes, stems and siliques. Also present in sepals and anther filaments.

The protein localises to the nucleus. It is found in the cytoplasm. Its pathway is protein modification; protein ubiquitination. Its function is as follows. Component of an E3 ubiquitin ligase complex that plays a central role in blue light-dependent circadian cycles. Acts as a blue light photoreceptor, due to the presence of FMN, that mediates light-regulated protein degradation of critical clock components by targeting them to the proteasome complex. The SCF(ADO3) E3 ubiquitin ligase complex is involved in the regulation of circadian clock-dependent processes including transition to flowering time, hypocotyl elongation, cotyledons and leaf movement rhythms. Forms a complex with 'GIGANTEA' (GI) to regulate 'CONSTANS' (CO) expression. Promotes CO expression during the light period of long days by decreasing the stability of CDF1 and CDF2 and by interacting directly with the CO protein and stabilizing it. ADO3 function is mainly GI dependent. Does not act as a regulator of CDF1 transcription. The interactions of ADO1/ZTL and ADO2 with ADO3 prevent its interaction with CDF1. In Arabidopsis thaliana (Mouse-ear cress), this protein is Adagio protein 3 (ADO3).